Reading from the N-terminus, the 226-residue chain is DELTA-alicitoxin-Pse1b (226 aa).

A signal peptide spans 1–21 (MRHFVVFLYMFLALSIPTAFA). Residues 22-45 (KKHIVTKKGNHQDITNDNEGENAE) constitute a propeptide that is removed on maturation. Positions 50–59 (TVAGAVIAGG) are plays an important role in the hemolytic activity. The N-terminal region stretch occupies residues 58–77 (GGELALKILTKILYEIGKID). 6 residues coordinate phosphocholine: serine 101, valine 134, serine 152, proline 154, tyrosine 180, and tyrosine 184. The segment at 152-167 (SVPFDYNLYSNWWNVK) is trp-rich region, which is important for the binding to lipid membrane.

This sequence belongs to the actinoporin family. Sea anemone subfamily. As to quaternary structure, octamer or nonamer in membranes. Monomer in the soluble state.

Its subcellular location is the secreted. The protein resides in the nematocyst. It is found in the target cell membrane. Pore-forming protein that forms cations-selective hydrophilic pores of around 1 nm and causes cytolysis. Pore formation is a multi-step process that involves specific recognition of membrane sphingomyelin (but neither cholesterol nor phosphatidylcholine) using aromatic rich region and adjacent phosphocholine (POC) binding site, firm binding to the membrane (mainly driven by hydrophobic interactions) accompanied by the transfer of the N-terminal region to the lipid-water interface and finally pore formation after oligomerization of monomers. In Phyllodiscus semoni (Night anemone), this protein is DELTA-alicitoxin-Pse1b.